Consider the following 337-residue polypeptide: Probable arabinose 5-phosphate isomerase (337 aa).

An SIS domain is found at 58–201; the sequence is VIDLILACEG…AVSLITARNF (144 aa). Residues 92–93, His-99, His-105, 131–140, 165–167, Thr-237, and Asp-290 each bind substrate; these read GT, KLIPSLKNFG, and TVE. His-99 contributes to the Zn(2+) binding site. Residues 227-284 form the CBS 1 domain; the sequence is MQTRLPTILPTTNFTDCLTVMNEGRMGVALVMENEQLKGIITDGDIRRALTANGAGTL. Residues 292–337 form the CBS 2 domain; the sequence is MTSSPKTIHQDEFLSKAEDFMKAKKIHSLVVVNDENHVVGLVEFSS.

It belongs to the SIS family. GutQ/KpsF subfamily.

The catalysed reaction is D-arabinose 5-phosphate = D-ribulose 5-phosphate. Catalyzes the reversible aldol-ketol isomerization between D-ribulose 5-phosphate (Ru5P) and D-arabinose 5-phosphate (A5P). The protein is Probable arabinose 5-phosphate isomerase of Haemophilus influenzae (strain ATCC 51907 / DSM 11121 / KW20 / Rd).